Here is a 477-residue protein sequence, read N- to C-terminus: UDP-glycosyltransferase 71K1 (477 aa).

Residues serine 285, 350-351, 368-376, and 390-393 each bind UDP-alpha-D-glucose; these read WA, HCGWNSILE, and YAEQ.

The protein belongs to the UDP-glycosyltransferase family.

Its function is as follows. Glycosyltransferase that possesses chalcone and flavonol 2'-O-glycosyltransferase activity. Converts phloretin to phlorizin (phloretin 2'-O-glucoside), a potent antioxidant. Possesses glycosyltransferase activity toward quercetin, isoliquiritigenin, butein and caffeic acid. The sequence is that of UDP-glycosyltransferase 71K1 from Malus domestica (Apple).